The sequence spans 142 residues: ATP synthase epsilon chain (142 aa).

It belongs to the ATPase epsilon chain family. F-type ATPases have 2 components, CF(1) - the catalytic core - and CF(0) - the membrane proton channel. CF(1) has five subunits: alpha(3), beta(3), gamma(1), delta(1), epsilon(1). CF(0) has three main subunits: a, b and c.

It localises to the cell inner membrane. Produces ATP from ADP in the presence of a proton gradient across the membrane. The protein is ATP synthase epsilon chain of Haemophilus influenzae (strain 86-028NP).